The following is a 792-amino-acid chain: RAD50-interacting protein 1 (792 aa).

The disordered stretch occupies residues Met-1–Glu-22. Residues Ile-103–Glu-124 are a coiled coil. The region spanning Trp-220–Lys-792 is the RINT1/TIP20 domain.

Belongs to the RINT1 family. As to quaternary structure, component of the NRZ complex composed of NBAS, ZW10 and RINT1/TIP20L; NRZ associates with SNAREs STX18, USE1L, BNIP1/SEC20L and SEC22B (the assembly has been described as syntaxin 18 complex). Interacts directly with BNIP1/SEC20L and ZW10. Interacts with UVRAG. Interacts with RAD50 during late S and G2/M phases. Interacts with RBL2, preferentially with the active, hypophosphorylated form.

The protein resides in the cytoplasm. It localises to the endoplasmic reticulum membrane. In terms of biological role, involved in regulation of membrane traffic between the Golgi and the endoplasmic reticulum (ER); the function is proposed to depend on its association in the NRZ complex which is believed to play a role in SNARE assembly at the ER. May play a role in cell cycle checkpoint control. Essential for telomere length control. This is RAD50-interacting protein 1 (RINT1) from Homo sapiens (Human).